The sequence spans 367 residues: Small ribosomal subunit protein uS2 (367 aa).

The disordered stretch occupies residues 1-68 (MPKKAEAKTG…NSTPSTGSKF (68 aa)). Residues 21–40 (AKKDVKAEVNETNKTAEKVS) are compositionally biased toward basic and acidic residues. Over residues 53-66 (TNESSSNSTPSTGS) the composition is skewed to low complexity.

It belongs to the universal ribosomal protein uS2 family.

This Malacoplasma penetrans (strain HF-2) (Mycoplasma penetrans) protein is Small ribosomal subunit protein uS2.